We begin with the raw amino-acid sequence, 101 residues long: Large ribosomal subunit protein uL24 (101 aa).

This sequence belongs to the universal ribosomal protein uL24 family. Part of the 50S ribosomal subunit.

One of two assembly initiator proteins, it binds directly to the 5'-end of the 23S rRNA, where it nucleates assembly of the 50S subunit. Functionally, one of the proteins that surrounds the polypeptide exit tunnel on the outside of the subunit. In Ruegeria sp. (strain TM1040) (Silicibacter sp.), this protein is Large ribosomal subunit protein uL24.